Consider the following 495-residue polypeptide: Glycerol kinase (495 aa).

Threonine 11 lines the ADP pocket. ATP is bound by residues threonine 11, threonine 12, and serine 13. Threonine 11 contributes to the sn-glycerol 3-phosphate binding site. Position 15 (arginine 15) interacts with ADP. Sn-glycerol 3-phosphate-binding residues include arginine 81, glutamate 82, tyrosine 133, and aspartate 242. The glycerol site is built by arginine 81, glutamate 82, tyrosine 133, aspartate 242, and glutamine 243. Positions 264 and 307 each coordinate ADP. ATP-binding residues include threonine 264, glycine 307, glutamine 311, and glycine 408. ADP contacts are provided by glycine 408 and asparagine 412.

It belongs to the FGGY kinase family.

It catalyses the reaction glycerol + ATP = sn-glycerol 3-phosphate + ADP + H(+). The protein operates within polyol metabolism; glycerol degradation via glycerol kinase pathway; sn-glycerol 3-phosphate from glycerol: step 1/1. Its activity is regulated as follows. Inhibited by fructose 1,6-bisphosphate (FBP). In terms of biological role, key enzyme in the regulation of glycerol uptake and metabolism. Catalyzes the phosphorylation of glycerol to yield sn-glycerol 3-phosphate. In Rhodospirillum rubrum (strain ATCC 11170 / ATH 1.1.1 / DSM 467 / LMG 4362 / NCIMB 8255 / S1), this protein is Glycerol kinase.